Reading from the N-terminus, the 703-residue chain is UvrABC system protein B (703 aa).

One can recognise a Helicase ATP-binding domain in the interval Glu-33 to Arg-419. ATP is bound at residue Gly-46–Thr-53. A Beta-hairpin motif is present at residues Tyr-99–Ile-122. Residues Gln-436–Ile-589 enclose the Helicase C-terminal domain. Positions Ala-659–Glu-694 constitute a UVR domain.

Belongs to the UvrB family. In terms of assembly, forms a heterotetramer with UvrA during the search for lesions. Interacts with UvrC in an incision complex.

The protein localises to the cytoplasm. Its function is as follows. The UvrABC repair system catalyzes the recognition and processing of DNA lesions. A damage recognition complex composed of 2 UvrA and 2 UvrB subunits scans DNA for abnormalities. Upon binding of the UvrA(2)B(2) complex to a putative damaged site, the DNA wraps around one UvrB monomer. DNA wrap is dependent on ATP binding by UvrB and probably causes local melting of the DNA helix, facilitating insertion of UvrB beta-hairpin between the DNA strands. Then UvrB probes one DNA strand for the presence of a lesion. If a lesion is found the UvrA subunits dissociate and the UvrB-DNA preincision complex is formed. This complex is subsequently bound by UvrC and the second UvrB is released. If no lesion is found, the DNA wraps around the other UvrB subunit that will check the other stand for damage. The protein is UvrABC system protein B of Bifidobacterium longum (strain NCC 2705).